Here is a 288-residue protein sequence, read N- to C-terminus: Anthranilate synthase beta subunit 1, chloroplastic (288 aa).

Residues 1 to 58 (MACSHLAAAAAAASPAAARSPAASSAATASAFARLSATPRVASGGLAVRGQRGVAAVV) constitute a chloroplast transit peptide. A Glutamine amidotransferase type-1 domain is found at 83–282 (PIIVIDNYDS…VRFIEELEKQ (200 aa)). 134-136 (GPG) lines the L-glutamine pocket. The Nucleophile role is filled by cysteine 161. L-glutamine contacts are provided by residues glutamine 165 and 215 to 216 (SL). Active-site residues include histidine 256 and glutamate 258.

In terms of assembly, heterotetramer consisting of two non-identical subunits: a beta subunit and a large alpha subunit. In terms of tissue distribution, expressed in roots and leaves.

The protein resides in the plastid. The protein localises to the chloroplast. It carries out the reaction chorismate + L-glutamine = anthranilate + pyruvate + L-glutamate + H(+). It functions in the pathway amino-acid biosynthesis; L-tryptophan biosynthesis; L-tryptophan from chorismate: step 1/5. Functionally, part of a heterotetrameric complex that catalyzes the two-step biosynthesis of anthranilate, an intermediate in the biosynthesis of L-tryptophan. In the first step, the glutamine-binding beta subunit of anthranilate synthase (AS) provides the glutamine amidotransferase activity which generates ammonia as a substrate that, along with chorismate, is used in the second step, catalyzed by the large alpha subunit of AS to produce anthranilate. This chain is Anthranilate synthase beta subunit 1, chloroplastic, found in Oryza sativa subsp. japonica (Rice).